We begin with the raw amino-acid sequence, 146 residues long: MAETQTTTPKKKAERRAPPPARARKNRPAAPAPGPHASLSYLRVAPRKVRIVADEVRGMKVGDALAMLKYTPQSAAKPLAKLLRSAVANAEQGGGRVDVDALFVKTLTVDQGPKMRRFMARAMGRAFRVEKKTSHVYVELGTAARG.

The interval 1–39 (MAETQTTTPKKKAERRAPPPARARKNRPAAPAPGPHASL) is disordered.

Belongs to the universal ribosomal protein uL22 family. Part of the 50S ribosomal subunit.

Functionally, this protein binds specifically to 23S rRNA; its binding is stimulated by other ribosomal proteins, e.g. L4, L17, and L20. It is important during the early stages of 50S assembly. It makes multiple contacts with different domains of the 23S rRNA in the assembled 50S subunit and ribosome. The globular domain of the protein is located near the polypeptide exit tunnel on the outside of the subunit, while an extended beta-hairpin is found that lines the wall of the exit tunnel in the center of the 70S ribosome. The sequence is that of Large ribosomal subunit protein uL22 from Anaeromyxobacter dehalogenans (strain 2CP-1 / ATCC BAA-258).